The sequence spans 552 residues: Cation transporter HKT1;1 (552 aa).

Over 1–70 the chain is Cytoplasmic; it reads MHPPSLVLDT…QSYSFLVCKS (70 aa). Helical transmembrane passes span 71–91 and 133–153; these read NPLV…FLAL and LWVL…MLGL. Residues 154–221 lie on the Cytoplasmic side of the membrane; sequence YFNNANANRN…TYNPCAVLVR (68 aa). 2 consecutive transmembrane segments (helical) span residues 222-242 and 291-311; these read IVTG…IIYF and VLLL…SPLL. Over 312-348 the chain is Cytoplasmic; it reads RLCVWVLGKVSGKAEYAYILQHPGETGYKHLHVRRNS. The next 2 membrane-spanning stretches (helical) occupy residues 349 to 369 and 402 to 422; these read VYIV…ICSF and ILDI…VMYL. Residues 423–448 lie on the Cytoplasmic side of the membrane; it reads PSDASFLTANADNQPLTDKKTNSISR. Helical transmembrane passes span 449–471 and 524–544; these read ALWR…LACI and GFVG…MFLG. The Cytoplasmic segment spans residues 545–552; the sequence is RLKEFILK.

This sequence belongs to the TrkH potassium transport family. HKT (TC 2.A.38.3) subfamily. Expressed in shoots. In roots, expressed in epidermis, exodermis, cortex, and sieve elements and companion cells of phloem. In mature leaves, expressed in large highly vacuolated cells of the adaxial epidermis, phloem and xylem.

The protein localises to the membrane. It carries out the reaction Na(+)(in) = Na(+)(out). Functions as a low-affinity sodium transporter. This Oryza sativa subsp. japonica (Rice) protein is Cation transporter HKT1;1.